Reading from the N-terminus, the 633-residue chain is Pentatricopeptide repeat-containing protein At3g24000, mitochondrial (633 aa).

The transit peptide at Met-1 to Tyr-63 directs the protein to the mitochondrion. PPR repeat units follow at residues Asp-94–Arg-124, Asp-125–Pro-159, Asn-160–Ser-194, Asn-195–Arg-225, Asn-226–Pro-260, Ser-261–Leu-295, Val-296–Arg-326, Asp-327–Pro-361, Asn-362–Pro-396, and Glu-397–Ala-431. The interval Ile-432–Glu-507 is type E motif. The tract at residues Asn-508–Lys-538 is type E(+) motif. Positions Glu-539–Trp-633 are type DYW motif.

The protein belongs to the PPR family. PCMP-H subfamily.

The protein localises to the mitochondrion. This is Pentatricopeptide repeat-containing protein At3g24000, mitochondrial (PCMP-H87) from Arabidopsis thaliana (Mouse-ear cress).